A 382-amino-acid chain; its full sequence is Succinyl-diaminopimelate desuccinylase (382 aa).

Residue His73 coordinates Zn(2+). Asp75 is an active-site residue. A Zn(2+)-binding site is contributed by Asp106. Residue Glu140 is the Proton acceptor of the active site. 3 residues coordinate Zn(2+): Glu141, Glu169, and His355.

It belongs to the peptidase M20A family. DapE subfamily. As to quaternary structure, homodimer. The cofactor is Zn(2+). Co(2+) is required as a cofactor.

It catalyses the reaction N-succinyl-(2S,6S)-2,6-diaminopimelate + H2O = (2S,6S)-2,6-diaminopimelate + succinate. Its pathway is amino-acid biosynthesis; L-lysine biosynthesis via DAP pathway; LL-2,6-diaminopimelate from (S)-tetrahydrodipicolinate (succinylase route): step 3/3. Its function is as follows. Catalyzes the hydrolysis of N-succinyl-L,L-diaminopimelic acid (SDAP), forming succinate and LL-2,6-diaminopimelate (DAP), an intermediate involved in the bacterial biosynthesis of lysine and meso-diaminopimelic acid, an essential component of bacterial cell walls. The chain is Succinyl-diaminopimelate desuccinylase from Saccharophagus degradans (strain 2-40 / ATCC 43961 / DSM 17024).